Here is a 154-residue protein sequence, read N- to C-terminus: uncharacterized protein (154 aa).

A run of 2 helical transmembrane segments spans residues 19 to 39 (LFAY…GLLL) and 51 to 71 (ADQV…LLFA).

Its subcellular location is the cell membrane. This is an uncharacterized protein from Mycobacterium tuberculosis (strain CDC 1551 / Oshkosh).